A 347-amino-acid polypeptide reads, in one-letter code: NADH-ubiquinone oxidoreductase chain 2 (347 aa).

Helical transmembrane passes span 5–22, 26–45, 60–80, 96–116, 122–142, 153–173, 178–198, 200–220, 237–257, 274–294, and 325–345; these read ILITITSTVVLGTMIVLF, WFMIWVGFEMNMLAIIPILM, FLTQATASMLLMLSIIINLLC, TMITIALTMKLGLSPFHFWVP, ISLSSGMILLTWQKIAPLSIL, LLLMMAITSMLVGGWGGLNQT, ILAYSSITHMGWMAAIMVYNP, LAILNLTIYIMMTLGTFMLFM, FPLMAPLILMLMLSLGGLPPL, DMIIMPTLMAITALLNLYFYT, and LLAPLIVTSTMLLPLTPMLAA.

This sequence belongs to the complex I subunit 2 family. As to quaternary structure, core subunit of respiratory chain NADH dehydrogenase (Complex I) which is composed of 45 different subunits. Interacts with TMEM242.

It is found in the mitochondrion inner membrane. It carries out the reaction a ubiquinone + NADH + 5 H(+)(in) = a ubiquinol + NAD(+) + 4 H(+)(out). Its function is as follows. Core subunit of the mitochondrial membrane respiratory chain NADH dehydrogenase (Complex I) which catalyzes electron transfer from NADH through the respiratory chain, using ubiquinone as an electron acceptor. Essential for the catalytic activity and assembly of complex I. This is NADH-ubiquinone oxidoreductase chain 2 from Ailuropoda melanoleuca (Giant panda).